Here is a 447-residue protein sequence, read N- to C-terminus: Lipid II isoglutaminyl synthase (glutamine-hydrolyzing) subunit MurT (447 aa).

The Zn(2+) site is built by Cys-205, Cys-208, Cys-227, and Cys-230. Residue Asp-355 is part of the active site.

It belongs to the MurCDEF family. MurT subfamily. Forms a heterodimer with GatD.

The catalysed reaction is beta-D-GlcNAc-(1-&gt;4)-Mur2Ac(oyl-L-Ala-gamma-D-Glu-L-Lys-D-Ala-D-Ala)-di-trans,octa-cis-undecaprenyl diphosphate + L-glutamine + ATP + H2O = beta-D-GlcNAc-(1-&gt;4)-Mur2Ac(oyl-L-Ala-D-isoglutaminyl-L-Lys-D-Ala-D-Ala)-di-trans,octa-cis-undecaprenyl diphosphate + L-glutamate + ADP + phosphate + H(+). It catalyses the reaction beta-D-GlcNAc-(1-&gt;4)-Mur2Ac(oyl-L-Ala-gamma-D-Glu-L-Lys-D-Ala-D-Ala)-di-trans,octa-cis-undecaprenyl diphosphate + ATP = beta-D-GlcNAc-(1-&gt;4)-Mur2Ac(oyl-L-Ala-gamma-D-O-P-Glu-L-Lys-D-Ala-D-Ala)-di-trans,octa-cis-undecaprenyl diphosphate + ADP. The enzyme catalyses beta-D-GlcNAc-(1-&gt;4)-Mur2Ac(oyl-L-Ala-gamma-D-O-P-Glu-L-Lys-D-Ala-D-Ala)-di-trans,octa-cis-undecaprenyl diphosphate + NH4(+) = beta-D-GlcNAc-(1-&gt;4)-Mur2Ac(oyl-L-Ala-D-isoglutaminyl-L-Lys-D-Ala-D-Ala)-di-trans,octa-cis-undecaprenyl diphosphate + phosphate + H(+). It functions in the pathway cell wall biogenesis; peptidoglycan biosynthesis. The lipid II isoglutaminyl synthase complex catalyzes the formation of alpha-D-isoglutamine in the cell wall lipid II stem peptide. The MurT subunit catalyzes the ATP-dependent amidation of D-glutamate residue of lipid II, converting it to an isoglutamine residue. The protein is Lipid II isoglutaminyl synthase (glutamine-hydrolyzing) subunit MurT of Streptococcus pneumoniae (strain ATCC BAA-255 / R6).